A 49-amino-acid polypeptide reads, in one-letter code: Large ribosomal subunit protein bL33A (49 aa).

The protein belongs to the bacterial ribosomal protein bL33 family.

The sequence is that of Large ribosomal subunit protein bL33A from Staphylococcus haemolyticus (strain JCSC1435).